The chain runs to 439 residues: 26S proteasome regulatory subunit 4 homolog (439 aa).

The tract at residues 1–46 (MGNNQSQGQGDKGEKKDQPKYQPPPPPTQFGKKKKRRGAETSTKLP) is disordered. An ATP-binding site is contributed by 225–232 (GEPGTGKT).

It belongs to the AAA ATPase family.

Its subcellular location is the cytoplasm. It is found in the nucleus. The 26S proteasome is involved in the ATP-dependent degradation of ubiquitinated proteins. The regulatory (or ATPase) complex confers ATP dependency and substrate specificity to the 26S complex. Plays an important role in regulating both growth and multicellular development. The chain is 26S proteasome regulatory subunit 4 homolog (psmC1) from Dictyostelium discoideum (Social amoeba).